The primary structure comprises 95 residues: UPF0235 protein MS0322 (95 aa).

This sequence belongs to the UPF0235 family.

The protein is UPF0235 protein MS0322 of Mannheimia succiniciproducens (strain KCTC 0769BP / MBEL55E).